The chain runs to 216 residues: Pyridoxine/pyridoxamine 5'-phosphate oxidase (216 aa).

Substrate is bound by residues 12–15 and Lys70; that span reads RREY. Residues 65–70, 80–81, Arg86, Lys87, and Gln109 contribute to the FMN site; these read RLVLLK and YT. Residues Tyr127, Arg131, and Ser135 each contribute to the substrate site. FMN-binding positions include 144-145 and Trp189; that span reads QS. A substrate-binding site is contributed by 195–197; the sequence is RMH. Residue Arg199 participates in FMN binding.

Belongs to the pyridoxamine 5'-phosphate oxidase family. Homodimer. FMN serves as cofactor.

The catalysed reaction is pyridoxamine 5'-phosphate + O2 + H2O = pyridoxal 5'-phosphate + H2O2 + NH4(+). It catalyses the reaction pyridoxine 5'-phosphate + O2 = pyridoxal 5'-phosphate + H2O2. It participates in cofactor metabolism; pyridoxal 5'-phosphate salvage; pyridoxal 5'-phosphate from pyridoxamine 5'-phosphate: step 1/1. It functions in the pathway cofactor metabolism; pyridoxal 5'-phosphate salvage; pyridoxal 5'-phosphate from pyridoxine 5'-phosphate: step 1/1. Functionally, catalyzes the oxidation of either pyridoxine 5'-phosphate (PNP) or pyridoxamine 5'-phosphate (PMP) into pyridoxal 5'-phosphate (PLP). In Sodalis glossinidius (strain morsitans), this protein is Pyridoxine/pyridoxamine 5'-phosphate oxidase.